The following is a 444-amino-acid chain: Trigger factor (444 aa).

The region spanning 163-248 (GDFLTVDFVG…AKALKKAVAP (86 aa)) is the PPIase FKBP-type domain.

This sequence belongs to the FKBP-type PPIase family. Tig subfamily.

The protein resides in the cytoplasm. It carries out the reaction [protein]-peptidylproline (omega=180) = [protein]-peptidylproline (omega=0). Involved in protein export. Acts as a chaperone by maintaining the newly synthesized protein in an open conformation. Functions as a peptidyl-prolyl cis-trans isomerase. This is Trigger factor from Granulibacter bethesdensis (strain ATCC BAA-1260 / CGDNIH1).